A 445-amino-acid polypeptide reads, in one-letter code: Serine--tRNA ligase (445 aa).

250–252 contacts L-serine; it reads TAE. 281–283 provides a ligand contact to ATP; it reads RAE. E304 is a binding site for L-serine. 368–371 provides a ligand contact to ATP; it reads EISS. Residue S404 coordinates L-serine.

This sequence belongs to the class-II aminoacyl-tRNA synthetase family. Type-1 seryl-tRNA synthetase subfamily. Homodimer. The tRNA molecule binds across the dimer.

It is found in the cytoplasm. It carries out the reaction tRNA(Ser) + L-serine + ATP = L-seryl-tRNA(Ser) + AMP + diphosphate + H(+). It catalyses the reaction tRNA(Sec) + L-serine + ATP = L-seryl-tRNA(Sec) + AMP + diphosphate + H(+). It participates in aminoacyl-tRNA biosynthesis; selenocysteinyl-tRNA(Sec) biosynthesis; L-seryl-tRNA(Sec) from L-serine and tRNA(Sec): step 1/1. Functionally, catalyzes the attachment of serine to tRNA(Ser). Is also able to aminoacylate tRNA(Sec) with serine, to form the misacylated tRNA L-seryl-tRNA(Sec), which will be further converted into selenocysteinyl-tRNA(Sec). This Azorhizobium caulinodans (strain ATCC 43989 / DSM 5975 / JCM 20966 / LMG 6465 / NBRC 14845 / NCIMB 13405 / ORS 571) protein is Serine--tRNA ligase.